The following is a 215-amino-acid chain: MOB kinase activator-like 1A (215 aa).

Residues 1 to 29 form a disordered region; sequence MSLFGLGSRNQKTFRPKKSAPTGSKGAQL. Zn(2+) contacts are provided by cysteine 80, cysteine 85, histidine 162, and histidine 167.

Belongs to the MOB1/phocein family. Isoform 1 is constitutively expressed. Isoform 2 is specifically expressed in flowers bud during sporogenesis and gametogenesis.

It localises to the cytoplasm. The protein resides in the cytoskeleton. The protein localises to the phragmoplast. In Medicago sativa subsp. falcata (Sickle medic), this protein is MOB kinase activator-like 1A.